We begin with the raw amino-acid sequence, 38 residues long: Toxic protein TimP (38 aa).

The segment at 1–20 is a transmembrane helix; sequence MKVRCFCVVLLVSGTLCLHA.

It belongs to the TimP toxin family.

The protein resides in the cell inner membrane. Functionally, toxic component of a probable type I toxin-antitoxin (TA) system. Neutralized by sRNA antitoxin TimR which binds to the 5' UTR of timP mRNA and inhibits translation. When TimP is expressed from its promoter in the absence of antitoxin leads to mild cell stress; overexpression in situ is toxic to the cell and causes membrane leakage. The antitoxin gene is encoded immediately upstream and transcribed divergently from the toxin gene; antitoxin RNA is less stable than timP mRNA. This is Toxic protein TimP from Salmonella typhimurium (strain SL1344).